We begin with the raw amino-acid sequence, 231 residues long: Eukaryotic translation initiation factor 4E-1 (231 aa).

A disordered region spans residues 1-55; the sequence is MVVEDTQKSSITDDQITANPNNENEDLEEGEILDDDDSSATSRPPSSSGALARNP. Positions 8–18 are enriched in polar residues; the sequence is KSSITDDQITA. Positions 23-38 are enriched in acidic residues; that stretch reads ENEDLEEGEILDDDDS. Residues 39–48 are compositionally biased toward low complexity; the sequence is SATSRPPSSS. EIF4G-binding regions lie at residues 56–59 and 66–102; these read HPLE and FDNPSAKSKQAAWGSSIRPIYTFATVEEFWSIYNNIH. MRNA contacts are provided by residues 74–79, lysine 106, and 124–125; these read KQAAWG and WE. Cysteine 129 and cysteine 167 are joined by a disulfide. The segment at 150–159 is EIF4G-binding; the sequence is YTLLGMIGEQ. Residues 174-179 and 219-223 each bind mRNA; these read RNRQEK and KKHDR.

It belongs to the eukaryotic initiation factor 4E family. As to quaternary structure, EIF4F is a multi-subunit complex, the composition of which varies with external and internal environmental conditions. It is composed of at least EIF4A, EIF4E and EIF4G. EIF4E is also known to interact with other partners. In higher plants two isoforms of EIF4F have been identified, named isoform EIF4F and isoform EIF(iso)4F. Isoform EIF4F has subunits p220 and p26, whereas isoform EIF(iso)4F has subunits p82 and p28. (Microbial infection) Interacts with potyvirus peanut stripe virus (PStV) helper component proteinase (HC-Pro) in the cytoplasm and with PStV viral genome-linked protein (VPg) in the nucleus; these interactions are possible in susceptible hosts but impaired in resistant plants. Post-translationally, according to the redox status, the Cys-129-Cys-167 disulfide bridge may have a role in regulating protein function by affecting its ability to bind capped mRNA. Expressed ubiquitously with highest levels in young leaves and roots, and lowest levels in flowers.

It is found in the nucleus. Its subcellular location is the cytoplasm. Its function is as follows. Component of the protein complex eIF4F, which is involved in the recognition of the mRNA cap, ATP-dependent unwinding of 5'-terminal secondary structure and recruitment of mRNA to the ribosome. Recognizes and binds the 7-methylguanosine-containing mRNA cap during an early step in the initiation of protein synthesis and facilitates ribosome binding by inducing the unwinding of the mRNAs secondary structures. Key component of recessive resistance to potyviruses such as peanut stripe virus (PStV). (Microbial infection) Susceptibility host factor required for viral infection by recruiting viral RNAs to the host ribosomal complex via an interaction with viral genome-linked protein (VPg). This chain is Eukaryotic translation initiation factor 4E-1, found in Arachis hypogaea (Peanut).